The primary structure comprises 60 residues: Sec-independent protein translocase protein TatA (60 aa).

The helical transmembrane segment at M1–G21 threads the bilayer.

It belongs to the TatA/E family. In terms of assembly, forms a complex with TatC.

The protein localises to the cell membrane. Functionally, part of the twin-arginine translocation (Tat) system that transports large folded proteins containing a characteristic twin-arginine motif in their signal peptide across membranes. TatA could form the protein-conducting channel of the Tat system. The chain is Sec-independent protein translocase protein TatA from Herpetosiphon aurantiacus (strain ATCC 23779 / DSM 785 / 114-95).